The primary structure comprises 64 residues: DNA gyrase inhibitor YacG (64 aa).

Zn(2+)-binding residues include Cys-9, Cys-12, Cys-28, and Cys-32. Residues 45–64 (KRIPSSGDLSESDDWSEEQK) are disordered. A compositionally biased stretch (acidic residues) spans 54–64 (SESDDWSEEQK).

Belongs to the DNA gyrase inhibitor YacG family. As to quaternary structure, interacts with GyrB. The cofactor is Zn(2+).

Inhibits all the catalytic activities of DNA gyrase by preventing its interaction with DNA. Acts by binding directly to the C-terminal domain of GyrB, which probably disrupts DNA binding by the gyrase. The polypeptide is DNA gyrase inhibitor YacG (Citrobacter koseri (strain ATCC BAA-895 / CDC 4225-83 / SGSC4696)).